A 390-amino-acid polypeptide reads, in one-letter code: Purine permease 21 (390 aa).

The interval 12–34 (QQGKEPIPTDQDERSSVSGSQTK) is disordered. 10 consecutive transmembrane segments (helical) span residues 44–64 (WLRVAIYTFFVISGQSVATIL), 78–98 (LATVVQLVGFPILLPYHLLSV), 118–138 (LVYIVLGLLVGAACYLYSIGL), 140–160 (YLPVSTLSLICASQLAFTAFF), 169–189 (LTPIILNSLFLLTISSTLLAF), 204–224 (YVKGFVCTVGASAGFGLLLSL), 241–261 (VINMIIYMSLVASCVSVVGLF), 287–307 (LVWTAVTWQVFSIGCTGLIFE), 312–332 (FSNAISALGLPVVPILAVIIF), and 336–356 (MNGLKVISMILAIWGFVSYVY). A disordered region spans residues 367-390 (KSNEIPTTESPDRPEAEGSSEQSK).

Belongs to the purine permeases (TC 2.A.7.14) family. As to expression, expressed in mesophyll cells.

The protein resides in the membrane. The chain is Purine permease 21 from Arabidopsis thaliana (Mouse-ear cress).